The chain runs to 298 residues: Tyrosine recombinase XerD (298 aa).

Positions 2–87 (KQELARIEQF…AVRRLFQYLY (86 aa)) constitute a Core-binding (CB) domain. Residues 108–292 (RLPKDLSEAQ…ATERLRQLHQ (185 aa)) form the Tyr recombinase domain. Catalysis depends on residues arginine 148, lysine 172, histidine 244, arginine 247, and histidine 270. Tyrosine 279 serves as the catalytic O-(3'-phospho-DNA)-tyrosine intermediate.

The protein belongs to the 'phage' integrase family. XerD subfamily. As to quaternary structure, forms a cyclic heterotetrameric complex composed of two molecules of XerC and two molecules of XerD, in which XerC interacts with XerD via its C-terminal region, XerD interacts with XerC via its C-terminal region and so on.

It localises to the cytoplasm. FtsK may regulate the catalytic switch between XerC and XerD in the heterotetrameric complex during the two steps of the recombination process. Functionally, site-specific tyrosine recombinase, which acts by catalyzing the cutting and rejoining of the recombining DNA molecules. Binds cooperatively to specific DNA consensus sequences that are separated from XerC binding sites by a short central region, forming the heterotetrameric XerC-XerD complex that recombines DNA substrates. The complex is essential to convert dimers of the bacterial chromosome into monomers to permit their segregation at cell division. It also contributes to the segregational stability of plasmids. In the complex XerD specifically exchanges the bottom DNA strands. The chain is Tyrosine recombinase XerD from Shigella flexneri.